A 332-amino-acid polypeptide reads, in one-letter code: Glycerol-3-phosphate dehydrogenase [NAD(P)+] (332 aa).

NADPH-binding residues include S10, W11, K31, and K105. Residues K105, G136, and S138 each contribute to the sn-glycerol 3-phosphate site. A140 contributes to the NADPH binding site. 5 residues coordinate sn-glycerol 3-phosphate: K191, D244, S254, R255, and N256. Catalysis depends on K191, which acts as the Proton acceptor. NADPH is bound at residue R255. NADPH-binding residues include V279 and E281.

The protein belongs to the NAD-dependent glycerol-3-phosphate dehydrogenase family.

Its subcellular location is the cytoplasm. It carries out the reaction sn-glycerol 3-phosphate + NAD(+) = dihydroxyacetone phosphate + NADH + H(+). It catalyses the reaction sn-glycerol 3-phosphate + NADP(+) = dihydroxyacetone phosphate + NADPH + H(+). It functions in the pathway membrane lipid metabolism; glycerophospholipid metabolism. In terms of biological role, catalyzes the reduction of the glycolytic intermediate dihydroxyacetone phosphate (DHAP) to sn-glycerol 3-phosphate (G3P), the key precursor for phospholipid synthesis. The sequence is that of Glycerol-3-phosphate dehydrogenase [NAD(P)+] from Anaeromyxobacter dehalogenans (strain 2CP-C).